The chain runs to 216 residues: MSFLFGSRSSKTFKPKKNIPEGSHQYELLKHAEATLGSGNLRMAVMLPEGEDLNEWVAVNTVDFFNQINMLYGTITDFCTEESCPVMSAGPKYEYHWADGTNIKKPIKCSAPKYIDYLMTWVQDQLDDETLFPSKIGVPFPKNFMSVAKTILKRLFRVYAHIYHQHFDPVIQLQEEAHLNTSFKHFIFFVQEFNLIDRRELAPLQELIEKLTSKDR.

N-acetylserine is present on S2. T12 and T35 each carry phosphothreonine; by STK4/MST1. The Zn(2+) site is built by C79, C84, H161, and H166.

The protein belongs to the MOB1/phocein family. As to quaternary structure, binds STK38L. Interacts with LATS1 and LATS2. In terms of processing, phosphorylated by STK3/MST2 and STK4/MST1 and this phosphorylation enhances its binding to LATS1. In terms of tissue distribution, adrenal gland, bone marrow, brain, lung, placenta, prostate, salivary gland, skeletal muscle, testis, thymus, thyroid gland, uterus, colon with mucosa, fetal brain and fetal liver.

The protein resides in the cytoplasm. Its subcellular location is the nucleus. Activator of LATS1/2 in the Hippo signaling pathway which plays a pivotal role in organ size control and tumor suppression by restricting proliferation and promoting apoptosis. The core of this pathway is composed of a kinase cascade wherein STK3/MST2 and STK4/MST1, in complex with its regulatory protein SAV1, phosphorylates and activates LATS1/2 in complex with its regulatory protein MOB1, which in turn phosphorylates and inactivates YAP1 oncoprotein and WWTR1/TAZ. Phosphorylation of YAP1 by LATS1/2 inhibits its translocation into the nucleus to regulate cellular genes important for cell proliferation, cell death, and cell migration. Stimulates the kinase activity of STK38L. In Homo sapiens (Human), this protein is MOB kinase activator 1B.